The primary structure comprises 198 residues: Ribosomal RNA small subunit methyltransferase G (198 aa).

S-adenosyl-L-methionine contacts are provided by residues Gly74, Phe79, Ile123–Gln124, and Arg136.

It belongs to the methyltransferase superfamily. RNA methyltransferase RsmG family.

It is found in the cytoplasm. It carries out the reaction guanosine(527) in 16S rRNA + S-adenosyl-L-methionine = N(7)-methylguanosine(527) in 16S rRNA + S-adenosyl-L-homocysteine. Specifically methylates the N7 position of guanine in position 527 of 16S rRNA. This is Ribosomal RNA small subunit methyltransferase G from Orientia tsutsugamushi (strain Boryong) (Rickettsia tsutsugamushi).